A 227-amino-acid polypeptide reads, in one-letter code: Nucleoside triphosphate pyrophosphatase (227 aa).

Residue Asp77 is the Proton acceptor of the active site.

It belongs to the Maf family. A divalent metal cation is required as a cofactor.

The protein resides in the cytoplasm. It catalyses the reaction a ribonucleoside 5'-triphosphate + H2O = a ribonucleoside 5'-phosphate + diphosphate + H(+). The enzyme catalyses a 2'-deoxyribonucleoside 5'-triphosphate + H2O = a 2'-deoxyribonucleoside 5'-phosphate + diphosphate + H(+). In terms of biological role, nucleoside triphosphate pyrophosphatase. May have a dual role in cell division arrest and in preventing the incorporation of modified nucleotides into cellular nucleic acids. The protein is Nucleoside triphosphate pyrophosphatase of Rickettsia typhi (strain ATCC VR-144 / Wilmington).